A 101-amino-acid chain; its full sequence is MIPGELMPLDGEIELNAGRPTVTVTVANTGDRPVQVGSHFHFYETNAALSFDREAARGYRLDIAAGTAVRFEPGQSRTVQLVALDGDRIVYGFNGRIMGAL.

The protein belongs to the urease beta subunit family. Heterotrimer of UreA (gamma), UreB (beta) and UreC (alpha) subunits. Three heterotrimers associate to form the active enzyme.

Its subcellular location is the cytoplasm. It catalyses the reaction urea + 2 H2O + H(+) = hydrogencarbonate + 2 NH4(+). The protein operates within nitrogen metabolism; urea degradation; CO(2) and NH(3) from urea (urease route): step 1/1. In Cupriavidus metallidurans (strain ATCC 43123 / DSM 2839 / NBRC 102507 / CH34) (Ralstonia metallidurans), this protein is Urease subunit beta.